The following is a 109-amino-acid chain: MRGPKPTLQEIVLDLCPYNEIQPVDLVCHEQLGESEDEIDEPDHAVNHQHQLLARRDEPQRHTIQCSCCKCNNTLQLVVEASRDTLRQLQQLFMDSLGFVCPWCATANQ.

Residues 1–41 (MRGPKPTLQEIVLDLCPYNEIQPVDLVCHEQLGESEDEIDE) form an E7 terminal domain region. The LXCXE motif; interaction with host RB1 and TMEM173/STING motif lies at 26–30 (LVCHE). A zinc finger lies at 68–104 (CCKCNNTLQLVVEASRDTLRQLQQLFMDSLGFVCPWC). Residues 86–94 (LRQLQQLFM) carry the Nuclear export signal motif.

It belongs to the papillomaviridae E7 protein family. Homodimer. Homooligomer. Interacts with host RB1; this interaction induces dissociation of RB1-E2F1 complex thereby disrupting RB1 activity. Interacts with host EP300; this interaction represses EP300 transcriptional activity. Interacts with protein E2; this interaction inhibits E7 oncogenic activity. Interacts with host TMEM173/STING; this interaction impairs the ability of TMEM173/STING to sense cytosolic DNA and promote the production of type I interferon (IFN-alpha and IFN-beta). Post-translationally, highly phosphorylated.

It is found in the host cytoplasm. Its subcellular location is the host nucleus. In terms of biological role, plays a role in viral genome replication by driving entry of quiescent cells into the cell cycle. Stimulation of progression from G1 to S phase allows the virus to efficiently use the cellular DNA replicating machinery to achieve viral genome replication. E7 protein has both transforming and trans-activating activities. Induces the disassembly of the E2F1 transcription factor from RB1, with subsequent transcriptional activation of E2F1-regulated S-phase genes. Interferes with host histone deacetylation mediated by HDAC1 and HDAC2, leading to transcription activation. Also plays a role in the inhibition of both antiviral and antiproliferative functions of host interferon alpha. Interaction with host TMEM173/STING impairs the ability of TMEM173/STING to sense cytosolic DNA and promote the production of type I interferon (IFN-alpha and IFN-beta). The protein is Protein E7 of Human papillomavirus 39.